Here is a 631-residue protein sequence, read N- to C-terminus: RING finger protein 112 (631 aa).

The segment at 57 to 98 adopts an RING-type zinc-finger fold; that stretch reads CSICLERLREPISLDCGHDFCIRCFSTHRIPGCELPCCPECR. The interaction with ZBTB16 stretch occupies residues 131 to 631; sequence AVRAERLLLV…GDREPLLQEE (501 aa). The GB1/RHD3-type G domain maps to 166-397; that stretch reads DTPVCLLAVL…YISDVLSTAP (232 aa). 317-318 is a binding site for GTP; the sequence is RD. 2 helical membrane-spanning segments follow: residues 547–567 and 580–600; these read LAAVGGAVGAGLMGLAGGVVG and GMVAAGAAVGATGAAVVGGGV.

The protein belongs to the TRAFAC class dynamin-like GTPase superfamily. GB1/RHD3 GTPase family. GB1 subfamily. Self-associates. Interacts with SP1 in an oxidative stress-regulated manner. Interacts with SIGMAR1 in an oxidative stress-regulated manner. Interacts with ZBTB16 (via C2H2-type zinc finger domains 1 and 2). Post-translationally, auto-ubiquitinated. As to expression, predominantly expressed in brain.

It is found in the membrane. Its subcellular location is the cytoplasm. The protein resides in the nucleus. The protein localises to the nuclear body. It localises to the nucleoplasm. It is found in the endosome. Its subcellular location is the cytoplasmic vesicle. The protein resides in the secretory vesicle. The protein localises to the synaptic vesicle. It localises to the postsynaptic density. It is found in the perikaryon. Its subcellular location is the cell projection. The protein resides in the neuron projection. The enzyme catalyses S-ubiquitinyl-[E2 ubiquitin-conjugating enzyme]-L-cysteine + [acceptor protein]-L-lysine = [E2 ubiquitin-conjugating enzyme]-L-cysteine + N(6)-ubiquitinyl-[acceptor protein]-L-lysine.. It functions in the pathway protein modification; protein ubiquitination. Functionally, E3 ubiquitin-protein ligase that plays an important role in neuronal differentiation, including neurogenesis and gliogenesis, during brain development. During embryonic development initiates neuronal differentiation by inducing cell cycle arrest at the G0/G1 phase through up-regulation of cell-cycle regulatory proteins. Plays a role not only in the fetal period during the development of the nervous system, but also in the adult brain, where it is involved in the maintenance of neural functions and protection of the nervous tissue cells from oxidative stress-induced damage. Exhibits GTPase and E3 ubiquitin-protein ligase activities. Regulates dendritic spine density and synaptic neurotransmission; its ability to hydrolyze GTP is involved in the maintenance of dendritic spine density. This chain is RING finger protein 112 (Rnf112), found in Rattus norvegicus (Rat).